A 123-amino-acid chain; its full sequence is Large ribosomal subunit protein bL17 (123 aa).

This sequence belongs to the bacterial ribosomal protein bL17 family. Part of the 50S ribosomal subunit. Contacts protein L32.

The chain is Large ribosomal subunit protein bL17 from Borreliella burgdorferi (strain ATCC 35210 / DSM 4680 / CIP 102532 / B31) (Borrelia burgdorferi).